A 334-amino-acid polypeptide reads, in one-letter code: Probable prephenate dehydratase (334 aa).

The 218-residue stretch at 7 to 224 folds into the Prephenate dehydratase domain; sequence RVLFLGPKGT…NTTRFLVLKR (218 aa). Positions 244-322 constitute an ACT domain; the sequence is LTFTTRQDDP…SDKSKQWCLW (79 aa).

The protein resides in the cytoplasm. The catalysed reaction is prephenate + H(+) = 3-phenylpyruvate + CO2 + H2O. The protein operates within amino-acid biosynthesis; L-phenylalanine biosynthesis; phenylpyruvate from prephenate: step 1/1. Functionally, catayzes the decarboxylation/dehydration of prephenate to phenylpyruvate. This chain is Probable prephenate dehydratase (PHA2), found in Saccharomyces cerevisiae (strain ATCC 204508 / S288c) (Baker's yeast).